The chain runs to 508 residues: Acyl-CoA-binding domain-containing protein 5 (508 aa).

Residues 44-133 (YETRFEAAVK…MKKIIETMPM (90 aa)) enclose the ACB domain. An acyl-CoA is bound by residues 55–64 (IQSLPKNGSF), 75–79 (YSFYK), lysine 101, and tyrosine 120. Residues 175 to 215 (AKAVNGKAESSDSGAESEEEEAQEELKGAEQSGSDDKKTLK) are disordered. A coiled-coil region spans residues 181–214 (KAESSDSGAESEEEEAQEELKGAEQSGSDDKKTL). Residues serine 184, serine 185, serine 187, serine 191, serine 206, and serine 233 each carry the phosphoserine modification. Basic and acidic residues predominate over residues 198–215 (EELKGAEQSGSDDKKTLK). Basic and acidic residues predominate over residues 240–260 (SDIHTDSSRSTRSSEDEKPGD). Positions 240 to 300 (SDIHTDSSRS…LTSDSDSEVY (61 aa)) are disordered. A Phosphoserine modification is found at serine 303. Disordered regions lie at residues 318-340 (PTQHLESSGFCEDAQQSPGNGSI) and 353-419 (EVKH…RGSR). The segment covering 353-376 (EVKHGGEDGRSSSGAPHRETRGGE) has biased composition (basic and acidic residues). Serine 405 carries the post-translational modification Phosphoserine. The segment covering 408 to 418 (DGERWGSDRGS) has biased composition (basic and acidic residues). Residues 428-453 (LVLIRLQEDMQNVLQRLHKLETLTAS) adopt a coiled-coil conformation. The residue at position 446 (lysine 446) is an N6-acetyllysine. The chain crosses the membrane as a helical span at residues 480–500 (GALAFAIIWPFIAQWLAHLYY).

It belongs to the ATG37 family.

The protein localises to the peroxisome membrane. Acyl-CoA binding protein which acts as the peroxisome receptor for pexophagy but is dispensable for aggrephagy and nonselective autophagy. Binds medium- and long-chain acyl-CoA esters. The protein is Acyl-CoA-binding domain-containing protein 5 (Acbd5) of Mus musculus (Mouse).